A 134-amino-acid polypeptide reads, in one-letter code: Large ribosomal subunit protein eL32 (134 aa).

Belongs to the eukaryotic ribosomal protein eL32 family.

This Drosophila acanthoptera (Fruit fly) protein is Large ribosomal subunit protein eL32 (RpL32).